The chain runs to 136 residues: Histone H3 (136 aa).

The disordered stretch occupies residues 1 to 43 (MARTKQTARKNVGGKAPRKHIGQKSARKTASTTAGMKKPHRYR). The residue at position 10 (Lys10) is an N6-methylated lysine. 2 positions are modified to N6-acetyllysine: Lys15 and Lys24. The span at 16–27 (APRKHIGQKSAR) shows a compositional bias: basic residues. Residues Lys28 and Lys37 each carry the N6-methylated lysine modification.

Belongs to the histone H3 family. In terms of assembly, the nucleosome is a histone octamer containing two molecules each of H2A, H2B, H3 and H4 assembled in one H3-H4 heterotetramer and two H2A-H2B heterodimers. The octamer wraps approximately 147 bp of DNA.

The protein localises to the nucleus. The protein resides in the chromosome. Core component of nucleosome. Nucleosomes wrap and compact DNA into chromatin, limiting DNA accessibility to the cellular machineries which require DNA as a template. Histones thereby play a central role in transcription regulation, DNA repair, DNA replication and chromosomal stability. DNA accessibility is regulated via a complex set of post-translational modifications of histones, also called histone code, and nucleosome remodeling. This Euplotes crassus protein is Histone H3.